Consider the following 73-residue polypeptide: UPF0270 protein SG2298 (73 aa).

This sequence belongs to the UPF0270 family.

The polypeptide is UPF0270 protein SG2298 (Sodalis glossinidius (strain morsitans)).